Consider the following 511-residue polypeptide: Alpha-amylase 1A (511 aa).

A signal peptide spans 1–15 (MKLFWLLFTIGFCWA). The residue at position 16 (glutamine 16) is a Pyrrolidone carboxylic acid. 3 disulfide bridges follow: cysteine 43–cysteine 101, cysteine 85–cysteine 130, and cysteine 156–cysteine 175. Residues asparagine 115, arginine 173, and aspartate 182 each coordinate Ca(2+). Arginine 210 is a binding site for chloride. The Nucleophile role is filled by aspartate 212. Histidine 216 contacts Ca(2+). Catalysis depends on glutamate 248, which acts as the Proton donor. Chloride-binding residues include asparagine 313 and arginine 352. Deamidated asparagine; partial is present on asparagine 365. A disulfide bridge links cysteine 393 with cysteine 399. The residue at position 427 (asparagine 427) is a Deamidated asparagine; partial; alternate. Asparagine 427 is a glycosylation site (N-linked (GlcNAc...) asparagine). Cysteines 465 and 477 form a disulfide. Asparagine 474 carries the post-translational modification Deamidated asparagine; partial. A glycan (N-linked (GlcNAc...) asparagine) is linked at asparagine 476.

It belongs to the glycosyl hydrolase 13 family. Monomer. Requires Ca(2+) as cofactor. It depends on chloride as a cofactor.

It is found in the secreted. The catalysed reaction is Endohydrolysis of (1-&gt;4)-alpha-D-glucosidic linkages in polysaccharides containing three or more (1-&gt;4)-alpha-linked D-glucose units.. Functionally, calcium-binding enzyme that initiates starch digestion in the oral cavity. Catalyzes the hydrolysis of internal (1-&gt;4)-alpha-D-glucosidic bonds, yielding a mixture of maltose, isomaltose, small amounts of glucose as well as small linear and branched oligosaccharides called dextrins. This chain is Alpha-amylase 1A, found in Homo sapiens (Human).